We begin with the raw amino-acid sequence, 962 residues long: Leucine--tRNA ligase (962 aa).

Positions 68-79 match the 'HIGH' region motif; that stretch reads PYPSGAGLHVGH. Positions 559-582 are disordered; sequence DYSPRTFDPDDANTSPETPLSRNE. A compositionally biased stretch (polar residues) spans 570–579; that stretch reads ANTSPETPLS. Positions 733-737 match the 'KMSKS' region motif; it reads KMGKS. Lysine 736 serves as a coordination point for ATP.

It belongs to the class-I aminoacyl-tRNA synthetase family.

It is found in the cytoplasm. It carries out the reaction tRNA(Leu) + L-leucine + ATP = L-leucyl-tRNA(Leu) + AMP + diphosphate. The protein is Leucine--tRNA ligase of Streptomyces avermitilis (strain ATCC 31267 / DSM 46492 / JCM 5070 / NBRC 14893 / NCIMB 12804 / NRRL 8165 / MA-4680).